Reading from the N-terminus, the 269-residue chain is Small ribosomal subunit protein uS3m (269 aa).

This sequence belongs to the universal ribosomal protein uS3 family.

It localises to the mitochondrion. Its function is as follows. Essential for mitochondrial protein synthesis and required for the maturation of small ribosomal subunits. The chain is Small ribosomal subunit protein uS3m (VAR1) from Monosporozyma servazzii (Yeast).